Here is a 593-residue protein sequence, read N- to C-terminus: MHVTVQLSLLLSLASSLPLVSAIPQHDGQAYTFPSTGRSATADTDPVLEVRQGAYRPPSAWTRLRDSIVESVWGVPQRGKDSETKTGKQSEAASKAPATLQARYGEDVVLRFTIKTQEEMKALVEASNILFLDVWGTHDDGIPSLLGLLPPSLQTSHVPLIRDLAQAIYESYPKNNPSSPSHPGATTRRFSPSASTPESQPHETKNIFFQDYQPLSVLLPWMRLLVSMFSSHTTLISVGTTAEGRDIPALRVGVHPTNNAQQAPRRRTIVISGGAHAREWISVSTVSYIAYSFITGYGKSRSITKLLEQFDYVFIPTVNPDGYVYTFSTDRLWRKNRQSTSLSFCPGIDLDRSWGFEWDGNATRSNPCSESYAGEGPFEAIEAREIADWARKEVTENNVHFAGFVDLHSYSQQILYPYGHSCAHLPANLENLEELGAGLAKAIRRSSREIYDTKAACRGIVASGAREKGTNEPVASYALESTAGSALDWFYHDLDVRFSYQIKLRDRGSYGFLLPREHIVPTGKEIYHAVVAMGKFLVSPHILEEEVDEPHAGEQTQDNSYDEDGDNLFRAQGGDPQVRFTRRNIGAHDDDSE.

A signal peptide spans 1-22 (MHVTVQLSLLLSLASSLPLVSA). Positions 23 to 175 (IPQHDGQAYT…QAIYESYPKN (153 aa)) are excised as a propeptide. Disordered regions lie at residues 75–98 (VPQR…KAPA) and 172–202 (YPKN…SQPH). The span at 78-88 (RGKDSETKTGK) shows a compositional bias: basic and acidic residues. The span at 188 to 199 (RRFSPSASTPES) shows a compositional bias: polar residues. The region spanning 211-537 (DYQPLSVLLP…HAVVAMGKFL (327 aa)) is the Peptidase M14 domain. Zn(2+) contacts are provided by His-276 and Glu-279. Residues 276–279 (HARE), Arg-334, and 351–352 (DR) each bind substrate. Cysteines 345 and 368 form a disulfide. Asn-361 carries an N-linked (GlcNAc...) asparagine glycan. His-408 contacts Zn(2+). 409-410 (SY) is a binding site for substrate. The disordered stretch occupies residues 548–593 (DEPHAGEQTQDNSYDEDGDNLFRAQGGDPQVRFTRRNIGAHDDDSE).

The protein belongs to the peptidase M14 family. It depends on Zn(2+) as a cofactor.

It is found in the vacuole. The protein resides in the secreted. In terms of biological role, inactive carboxypeptidase that may play a role in cell wall organization and biogenesis. The protein is Inactive metallocarboxypeptidase ECM14 (ECM14) of Arthroderma otae (strain ATCC MYA-4605 / CBS 113480) (Microsporum canis).